We begin with the raw amino-acid sequence, 426 residues long: Histone-binding protein RBBP7 (426 aa).

7 WD repeats span residues 47–123 (QWLP…KINH), 129–174 (RARY…LRLR), 182–218 (GLSW…KIVD), 229–270 (VVED…HSVD), 276–313 (VNCL…LHSF), 319–370 (EIFQ…LFIH), and 377–404 (ISDF…VWQM).

Belongs to the WD repeat RBAP46/RBAP48/MSI1 family. In terms of assembly, binds directly to helix 1 of the histone fold of histone H4, a region that is not accessible when H4 is in chromatin.

Its subcellular location is the nucleus. Core histone-binding subunit that may target chromatin remodeling factors, histone acetyltransferases and histone deacetylases to their histone substrates in a manner that is regulated by nucleosomal DNA. Component of several complexes which regulate chromatin metabolism. In Danio rerio (Zebrafish), this protein is Histone-binding protein RBBP7 (rbbp7).